A 289-amino-acid polypeptide reads, in one-letter code: Purine nucleoside phosphorylase (289 aa).

Met1 is modified (N-acetylmethionine). Phosphate contacts are provided by residues Ser33, His64, and Arg84–His86. Residue Tyr88 coordinates a purine D-ribonucleoside. A phosphate-binding site is contributed by Ala116. The a purine D-ribonucleoside site is built by Glu201 and Met219. Position 220 (Ser220) interacts with phosphate. Asn243 is an a purine D-ribonucleoside binding site. Residue Ser251 is modified to Phosphoserine. A purine D-ribonucleoside is bound at residue His257.

This sequence belongs to the PNP/MTAP phosphorylase family. As to quaternary structure, homotrimer.

It localises to the cytoplasm. The enzyme catalyses inosine + phosphate = alpha-D-ribose 1-phosphate + hypoxanthine. The catalysed reaction is guanosine + phosphate = alpha-D-ribose 1-phosphate + guanine. It carries out the reaction 2'-deoxyguanosine + phosphate = 2-deoxy-alpha-D-ribose 1-phosphate + guanine. It catalyses the reaction 2'-deoxyinosine + phosphate = 2-deoxy-alpha-D-ribose 1-phosphate + hypoxanthine. It participates in purine metabolism; purine nucleoside salvage. Catalyzes the phosphorolytic breakdown of the N-glycosidic bond in the beta-(deoxy)ribonucleoside molecules, with the formation of the corresponding free purine bases and pentose-1-phosphate. Preferentially acts on 6-oxopurine nucleosides including inosine and guanosine. The sequence is that of Purine nucleoside phosphorylase (PNP) from Bos taurus (Bovine).